The primary structure comprises 159 residues: MQKHLINNNIKIRILDSNIKKNSSFFLPQYATPGSSGLDLRASIKKKISLPSKEVILVPTGIAIHIDNPYITALVLPRSGLGHKNGIILGNLIGLIDSDYQGELMISLWNRSKNIFFINPYDRIAQMIFVPIIRPTFSIVDDFEETVRFGKGFGHSGVQ.

Substrate is bound by residues 78–80, N91, 95–97, and M105; these read RSG and LID.

The protein belongs to the dUTPase family. It depends on Mg(2+) as a cofactor.

The catalysed reaction is dUTP + H2O = dUMP + diphosphate + H(+). It participates in pyrimidine metabolism; dUMP biosynthesis; dUMP from dCTP (dUTP route): step 2/2. Its function is as follows. This enzyme is involved in nucleotide metabolism: it produces dUMP, the immediate precursor of thymidine nucleotides and it decreases the intracellular concentration of dUTP so that uracil cannot be incorporated into DNA. The polypeptide is Deoxyuridine 5'-triphosphate nucleotidohydrolase (Buchnera aphidicola subsp. Schizaphis graminum (strain Sg)).